A 295-amino-acid polypeptide reads, in one-letter code: Ethanolamine ammonia-lyase small subunit (295 aa).

The adenosylcob(III)alamin site is built by V209 and E230.

It belongs to the EutC family. The basic unit is a heterodimer which dimerizes to form tetramers. The heterotetramers trimerize; 6 large subunits form a core ring with 6 small subunits projecting outwards. Requires adenosylcob(III)alamin as cofactor.

It localises to the bacterial microcompartment. It catalyses the reaction ethanolamine = acetaldehyde + NH4(+). It participates in amine and polyamine degradation; ethanolamine degradation. In terms of biological role, catalyzes the deamination of various vicinal amino-alcohols to oxo compounds. Allows this organism to utilize ethanolamine as the sole source of nitrogen and carbon in the presence of external vitamin B12. The sequence is that of Ethanolamine ammonia-lyase small subunit from Clostridium perfringens (strain ATCC 13124 / DSM 756 / JCM 1290 / NCIMB 6125 / NCTC 8237 / Type A).